The following is a 652-amino-acid chain: Chaperone protein HtpG (652 aa).

Positions 1-348 (MATDAHKETL…SDDLPLNVSR (348 aa)) are a; substrate-binding. The interval 349–565 (ELLQHNPLLD…EYDFGMGMQR (217 aa)) is b. The tract at residues 566–652 (LLKAAGHAMP…EAKSNAARGD (87 aa)) is c.

Belongs to the heat shock protein 90 family. As to quaternary structure, homodimer.

Its subcellular location is the cytoplasm. Molecular chaperone. Has ATPase activity. The chain is Chaperone protein HtpG from Alkalilimnicola ehrlichii (strain ATCC BAA-1101 / DSM 17681 / MLHE-1).